The following is an 85-amino-acid chain: Small ribosomal subunit protein bS18c (85 aa).

It belongs to the bacterial ribosomal protein bS18 family. In terms of assembly, part of the 30S ribosomal subunit.

It localises to the plastid. Its subcellular location is the chloroplast. This chain is Small ribosomal subunit protein bS18c, found in Zygnema circumcarinatum (Green alga).